The primary structure comprises 93 residues: Integration host factor subunit beta (93 aa).

It belongs to the bacterial histone-like protein family. Heterodimer of an alpha and a beta chain.

In terms of biological role, this protein is one of the two subunits of integration host factor, a specific DNA-binding protein that functions in genetic recombination as well as in transcriptional and translational control. The sequence is that of Integration host factor subunit beta from Tolumonas auensis (strain DSM 9187 / NBRC 110442 / TA 4).